Reading from the N-terminus, the 507-residue chain is Glycosyltransferase family 92 protein C33H5.2 (507 aa).

A helical transmembrane segment spans residues 6 to 26 (VILVFCASFALFFTFIIFGRY). The GT92 domain occupies 155 to 444 (RDVVMCIAPL…LKCYNEKFYD (290 aa)).

This sequence belongs to the glycosyltransferase 92 family.

Its subcellular location is the membrane. The polypeptide is Glycosyltransferase family 92 protein C33H5.2 (Caenorhabditis elegans).